Here is a 522-residue protein sequence, read N- to C-terminus: MSNRVIIFDTTLRDGEQALAASLSVKEKLQIAMALERLGVDVMEVGFPVSSPGDFESVQTIARTIKNSRVCALSRALEKDIDAAAQALSVAEQFRIHTFISTSTIHVESKLKRSFEQVLEMAVGAVKYARRFTDDVEFSCEDAGRTPIDNLCRMVEAAIHAGARTINIPDTVGYTVPSEFGGIIQTLFNRVPNIDQAIISVHCHDDLGMSVANSITAVQHGARQIECTMNGIGERAGNCSLEEIAMILATRKNLLGVETGINAKEIHRTSNLVSQLCNMPIQSNKAIVGANAFTHSSGIHQDGMLKAQNTYEIMTPESIGLNRNNLNMTSRSGRHVIKHRMEEMGYSEQDFNLDALYEQFLHLADKKGQVFDYDLEALAFMEAQAAEDNFYQLQQLVVQSDSTEGVATATVRIDVGGEIKTEAATGNGPVDAAYNAIARATDRRIDIISYKLGAKGEGQNALGQVDITAVYHEQNFHGVGLATDVVEASARALVHVMNLTCRADKVADYKQNMHKNRELGGV.

The region spanning 5-267 (VIIFDTTLRD…ETGINAKEIH (263 aa)) is the Pyruvate carboxyltransferase domain. Positions 14, 202, 204, and 238 each coordinate Mn(2+). The interval 392–522 (QLQQLVVQSD…MHKNRELGGV (131 aa)) is regulatory domain.

This sequence belongs to the alpha-IPM synthase/homocitrate synthase family. LeuA type 1 subfamily. Homodimer. It depends on Mn(2+) as a cofactor.

The protein localises to the cytoplasm. The catalysed reaction is 3-methyl-2-oxobutanoate + acetyl-CoA + H2O = (2S)-2-isopropylmalate + CoA + H(+). The protein operates within amino-acid biosynthesis; L-leucine biosynthesis; L-leucine from 3-methyl-2-oxobutanoate: step 1/4. Catalyzes the condensation of the acetyl group of acetyl-CoA with 3-methyl-2-oxobutanoate (2-ketoisovalerate) to form 3-carboxy-3-hydroxy-4-methylpentanoate (2-isopropylmalate). This chain is 2-isopropylmalate synthase, found in Shewanella sp. (strain ANA-3).